The following is a 274-amino-acid chain: Undecaprenyl-diphosphatase (274 aa).

A run of 7 helical transmembrane segments spans residues 40–60 (PGAA…LMFF), 90–110 (WFII…KDVI), 114–134 (FRSL…LGVA), 147–167 (ISLR…IPGV), 190–210 (YAFL…LKDI), 221–241 (PTIV…AWLL), and 252–272 (FVLY…TGVI).

This sequence belongs to the UppP family.

It is found in the cell membrane. The catalysed reaction is di-trans,octa-cis-undecaprenyl diphosphate + H2O = di-trans,octa-cis-undecaprenyl phosphate + phosphate + H(+). Its function is as follows. Catalyzes the dephosphorylation of undecaprenyl diphosphate (UPP). Confers resistance to bacitracin. This is Undecaprenyl-diphosphatase from Nocardioides sp. (strain ATCC BAA-499 / JS614).